Here is a 364-residue protein sequence, read N- to C-terminus: Probable dual-specificity RNA methyltransferase RlmN (364 aa).

E106 functions as the Proton acceptor in the catalytic mechanism. The Radical SAM core domain occupies 112–350; it reads YPQRNTVCIS…SCTVRDTRGR (239 aa). C119 and C356 are oxidised to a cystine. [4Fe-4S] cluster-binding residues include C126, C130, and C133. S-adenosyl-L-methionine is bound by residues 177-178, S211, 234-236, and N313; these read GE and SLH. The active-site S-methylcysteine intermediate is the C356.

The protein belongs to the radical SAM superfamily. RlmN family. It depends on [4Fe-4S] cluster as a cofactor.

Its subcellular location is the cytoplasm. It carries out the reaction adenosine(2503) in 23S rRNA + 2 reduced [2Fe-2S]-[ferredoxin] + 2 S-adenosyl-L-methionine = 2-methyladenosine(2503) in 23S rRNA + 5'-deoxyadenosine + L-methionine + 2 oxidized [2Fe-2S]-[ferredoxin] + S-adenosyl-L-homocysteine. It catalyses the reaction adenosine(37) in tRNA + 2 reduced [2Fe-2S]-[ferredoxin] + 2 S-adenosyl-L-methionine = 2-methyladenosine(37) in tRNA + 5'-deoxyadenosine + L-methionine + 2 oxidized [2Fe-2S]-[ferredoxin] + S-adenosyl-L-homocysteine. Its function is as follows. Specifically methylates position 2 of adenine 2503 in 23S rRNA and position 2 of adenine 37 in tRNAs. This Mycobacterium ulcerans (strain Agy99) protein is Probable dual-specificity RNA methyltransferase RlmN.